The following is a 261-amino-acid chain: MSDILDRIIAVKREEVRAAEQSAPLEELRLEASSRDLRDFVGALRAKHAAGLAAVIAEVKKASPSKGVLREHFVPAEIARSYEKHGAACLSVLTDVQFFKGSVAYLEQARAACNLPVLRKDFIVDPYQIVEARAMGADAILLIAAALETSQMQDLEALAHSLGLAVLVEVHDRDELMEALTLKTPLIGINNRNLRTFETSIETTIGMLEAIPDDRIVVTESGILSRVDVERLRAMDVHTFLVGEAFMRADEPGVELARMFF.

It belongs to the TrpC family.

It catalyses the reaction 1-(2-carboxyphenylamino)-1-deoxy-D-ribulose 5-phosphate + H(+) = (1S,2R)-1-C-(indol-3-yl)glycerol 3-phosphate + CO2 + H2O. It participates in amino-acid biosynthesis; L-tryptophan biosynthesis; L-tryptophan from chorismate: step 4/5. The chain is Indole-3-glycerol phosphate synthase from Paraburkholderia xenovorans (strain LB400).